The sequence spans 472 residues: Interferon-induced protein with tetratricopeptide repeats 2 (472 aa).

S2 carries the N-acetylserine modification. 9 TPR repeats span residues 51–89, 90–135, 136–171, 172–208, 247–280, 281–335, 336–366, 367–405, and 406–448; these read ATMC…ADQA, EIRS…RIES, PELD…KPKN, PEFT…NPDN, TDVL…IPNN, AYLH…NLFR, VCSI…KELT, PVAK…NQKS, and REKE…KMQQ. A disordered region spans residues 446–472; that stretch reads MQQADEDSERGLESGSLIPSASSWNGE. Over residues 462–472 the composition is skewed to polar residues; that stretch reads LIPSASSWNGE.

Belongs to the IFIT family. In terms of assembly, domain-swapped homodimer. Component of an interferon-dependent multiprotein complex, at least composed of IFIT1, IFIT2 and IFIT3. Interacts with IFIT1 and IFIT3. Interacts with STING1/MITA and disrupts its interaction with MAVS or TBK1. Interacts with EIF3E and EIF3C.

It localises to the cytoplasm. Its subcellular location is the endoplasmic reticulum. Its function is as follows. IFN-induced antiviral protein which inhibits expression of viral messenger RNAs lacking 2'-O-methylation of the 5' cap. The ribose 2'-O-methylation would provide a molecular signature to distinguish between self and non-self mRNAs by the host during viral infection. Viruses evolved several ways to evade this restriction system such as encoding their own 2'-O-methylase for their mRNAs or by stealing host cap containing the 2'-O-methylation (cap snatching mechanism). Binds AU-rich viral RNAs, with or without 5' triphosphorylation, RNA-binding is required for antiviral activity. Can promote apoptosis. The chain is Interferon-induced protein with tetratricopeptide repeats 2 (IFIT2) from Homo sapiens (Human).